Reading from the N-terminus, the 122-residue chain is Large ribosomal subunit protein uL14 (122 aa).

The protein belongs to the universal ribosomal protein uL14 family. In terms of assembly, part of the 50S ribosomal subunit. Forms a cluster with proteins L3 and L19. In the 70S ribosome, L14 and L19 interact and together make contacts with the 16S rRNA in bridges B5 and B8.

Binds to 23S rRNA. Forms part of two intersubunit bridges in the 70S ribosome. This is Large ribosomal subunit protein uL14 from Variovorax paradoxus (strain S110).